Reading from the N-terminus, the 338-residue chain is Fusarubin cluster-specific transcription factor fsr6 (338 aa).

A DNA-binding region (zn(2)-C6 fungal-type) is located at residues 16 to 44; the sequence is CDACTTAKVRCSRTHPCERCEDNGQAKEC.

Its subcellular location is the nucleus. Its function is as follows. Transcription factor that regulates the expression of the gene cluster that mediates the biosynthesis of fusarubins, highly pigmented naphthoquinones responsible for the coloration of the fruiting bodies. This is Fusarubin cluster-specific transcription factor fsr6 from Gibberella fujikuroi (strain CBS 195.34 / IMI 58289 / NRRL A-6831) (Bakanae and foot rot disease fungus).